We begin with the raw amino-acid sequence, 166 residues long: NAD(P)H-quinone oxidoreductase subunit I, chloroplastic (166 aa).

2 consecutive 4Fe-4S ferredoxin-type domains span residues 55-84 (GRIH…VDWK) and 95-124 (LNYS…MTEE). [4Fe-4S] cluster contacts are provided by Cys-64, Cys-67, Cys-70, Cys-74, Cys-104, Cys-107, Cys-110, and Cys-114.

It belongs to the complex I 23 kDa subunit family. In terms of assembly, NDH is composed of at least 16 different subunits, 5 of which are encoded in the nucleus. The cofactor is [4Fe-4S] cluster.

The protein localises to the plastid. It localises to the chloroplast thylakoid membrane. The enzyme catalyses a plastoquinone + NADH + (n+1) H(+)(in) = a plastoquinol + NAD(+) + n H(+)(out). It carries out the reaction a plastoquinone + NADPH + (n+1) H(+)(in) = a plastoquinol + NADP(+) + n H(+)(out). Functionally, NDH shuttles electrons from NAD(P)H:plastoquinone, via FMN and iron-sulfur (Fe-S) centers, to quinones in the photosynthetic chain and possibly in a chloroplast respiratory chain. The immediate electron acceptor for the enzyme in this species is believed to be plastoquinone. Couples the redox reaction to proton translocation, and thus conserves the redox energy in a proton gradient. This is NAD(P)H-quinone oxidoreductase subunit I, chloroplastic from Acanthospermum australe (Paraguayan starburr).